Reading from the N-terminus, the 205-residue chain is Large ribosomal subunit protein uL3 (205 aa).

It belongs to the universal ribosomal protein uL3 family. Part of the 50S ribosomal subunit. Forms a cluster with proteins L14 and L19.

In terms of biological role, one of the primary rRNA binding proteins, it binds directly near the 3'-end of the 23S rRNA, where it nucleates assembly of the 50S subunit. This Bacteroides thetaiotaomicron (strain ATCC 29148 / DSM 2079 / JCM 5827 / CCUG 10774 / NCTC 10582 / VPI-5482 / E50) protein is Large ribosomal subunit protein uL3.